A 596-amino-acid polypeptide reads, in one-letter code: Nitrite reductase (596 aa).

The first 29 residues, 1–29 (MRQRTPFARPGLLASAALALVLGPLAASA), serve as a signal peptide directing secretion. The tract at residues 30–76 (QEQVAPPKDPAAALEDHKTRTDNRYEPSLDNLAQQDVAAPGAPEGVS) is N-terminal tail. A heme c-binding site is contributed by H46. The heme d1 site is built by Y54 and S57. The Cytochrome c domain maps to 77–162 (ALSDAQYNEA…ANYLLLDPAA (86 aa)). The heme c site is built by C94, C97, H98, K108, and Y122. Positions 138, 203, 229, 232, 245, 272, 292, 420, 536, and 583 each coordinate heme d1. Positions 163–596 (PPEFGMKEMR…NVYNTMTDTY (434 aa)) are D1-heme domain.

As to quaternary structure, homodimer. Requires heme c as cofactor. Heme serves as cofactor.

It localises to the periplasm. The catalysed reaction is nitric oxide + Fe(III)-[cytochrome c] + H2O = Fe(II)-[cytochrome c] + nitrite + 2 H(+). The enzyme catalyses A + NH4(+) + H2O = hydroxylamine + AH2 + H(+). In Paracoccus pantotrophus (Thiosphaera pantotropha), this protein is Nitrite reductase (nirS).